The primary structure comprises 748 residues: Structure-specific endonuclease subunit SLX4 (748 aa).

The interval 50–102 (LSSDDDSISTQVKSVTAQKSPITQETTKNDTERNKDVDKSCNPVSTSQPDLGE) is disordered. Positions 57 to 75 (ISTQVKSVTAQKSPITQET) are enriched in polar residues. Thr-72 is modified (phosphothreonine; by ATR and ATM). The span at 76 to 88 (TKNDTERNKDVDK) shows a compositional bias: basic and acidic residues. Position 113 is a phosphothreonine; by ATR and ATM (Thr-113). 2 disordered regions span residues 215–236 (IKTQNEGNSDKPPRARNNKGEK) and 277–303 (EKSSSSLDNQESSQQRLWTASQLPPEL). The span at 222-236 (NSDKPPRARNNKGEK) shows a compositional bias: basic and acidic residues. The segment covering 277 to 291 (EKSSSSLDNQESSQQ) has biased composition (low complexity). Ser-289 is modified (phosphoserine; by ATR and ATM). Thr-319 is subject to Phosphothreonine; by ATR and ATM. Phosphoserine; by ATR and ATM is present on residues Ser-329 and Ser-355.

The protein belongs to the SLX4 family. In terms of assembly, forms a heterodimer with SLX1. Interacts with RAD1; catalytic subunit of the RAD1-RAD10 endonuclease. Interacts with RTT107. In terms of processing, phosphorylated by ATR (MEC1) and ATM (TEL1) upon DNA damage. This appears to be required for the function with the RAD1-RAD10 endonuclease.

It is found in the nucleus. The protein resides in the cytoplasm. Its function is as follows. Regulatory subunit that interacts with and increases the activity of different structure-specific endonucleases. Has several distinct roles in protecting genome stability by resolving diverse forms of deleterious DNA structures. Component of the SLX1-SLX4 structure-specific endonuclease that resolves DNA secondary structures generated during DNA repair and recombination. Has endonuclease activity towards branched DNA substrates, introducing single-strand cuts in duplex DNA close to junctions with ss-DNA. Has a preference for simple Y, 5'-flap and replication fork-like structures. It cleaves the strand bearing the 5'-non-homologous arm at the branch site junction and generates ligatable, nicked products from the 5'-flap or replication fork substrates. Plays a critical role in maintaining the integrity of the ribosomal DNA (rDNA) loci, where it has a role in re-starting stalled replication forks. Has Holliday junction resolvase activity in vitro. Interacts with the structure-specific RAD1-RAD10 endonuclease and promotes RAD1-RAD10-dependent 3'-non-homologous tail removal (NHTR) during repair of double-strand breaks by single-strand annealing. SLX4 also promotes recovery from DNA-alkylation-induced replisome stalling during DNA replication by facilitating the error-free mode of lesion bypass. This does not require SLX1 or RAD1-RAD10, but probably RTT107. This Saccharomyces cerevisiae (strain YJM789) (Baker's yeast) protein is Structure-specific endonuclease subunit SLX4.